Here is a 506-residue protein sequence, read N- to C-terminus: Glutamyl-tRNA(Gln) amidotransferase subunit A, mitochondrial (506 aa).

Catalysis depends on charge relay system residues lysine 62 and serine 141. The active-site Acyl-ester intermediate is the serine 165.

It belongs to the amidase family. GatA subfamily. As to quaternary structure, subunit of the heterotrimeric GatCAB amidotransferase (AdT) complex, composed of A, B and C subunits.

It localises to the mitochondrion. It catalyses the reaction L-glutamyl-tRNA(Gln) + L-glutamine + ATP + H2O = L-glutaminyl-tRNA(Gln) + L-glutamate + ADP + phosphate + H(+). In terms of biological role, allows the formation of correctly charged Gln-tRNA(Gln) through the transamidation of misacylated Glu-tRNA(Gln) in the mitochondria. The reaction takes place in the presence of glutamine and ATP through an activated gamma-phospho-Glu-tRNA(Gln). The chain is Glutamyl-tRNA(Gln) amidotransferase subunit A, mitochondrial from Emericella nidulans (strain FGSC A4 / ATCC 38163 / CBS 112.46 / NRRL 194 / M139) (Aspergillus nidulans).